We begin with the raw amino-acid sequence, 286 residues long: ATP synthase gamma chain (286 aa).

It belongs to the ATPase gamma chain family. In terms of assembly, F-type ATPases have 2 components, CF(1) - the catalytic core - and CF(0) - the membrane proton channel. CF(1) has five subunits: alpha(3), beta(3), gamma(1), delta(1), epsilon(1). CF(0) has three main subunits: a, b and c.

The protein localises to the cell inner membrane. Its function is as follows. Produces ATP from ADP in the presence of a proton gradient across the membrane. The gamma chain is believed to be important in regulating ATPase activity and the flow of protons through the CF(0) complex. The protein is ATP synthase gamma chain of Dechloromonas aromatica (strain RCB).